The sequence spans 95 residues: Small ribosomal subunit protein bS6 (95 aa).

Belongs to the bacterial ribosomal protein bS6 family.

Its function is as follows. Binds together with bS18 to 16S ribosomal RNA. The polypeptide is Small ribosomal subunit protein bS6 (Clostridium acetobutylicum (strain ATCC 824 / DSM 792 / JCM 1419 / IAM 19013 / LMG 5710 / NBRC 13948 / NRRL B-527 / VKM B-1787 / 2291 / W)).